The chain runs to 406 residues: Cysteine desulfurase (406 aa).

K226 is modified (N6-(pyridoxal phosphate)lysine). C364 acts as the Cysteine persulfide intermediate in catalysis.

It belongs to the class-V pyridoxal-phosphate-dependent aminotransferase family. Csd subfamily. Homodimer. Interacts with SufE and the SufBCD complex composed of SufB, SufC and SufD. The interaction with SufE is required to mediate the direct transfer of the sulfur atom from the S-sulfanylcysteine. Pyridoxal 5'-phosphate is required as a cofactor.

Its subcellular location is the cytoplasm. The enzyme catalyses (sulfur carrier)-H + L-cysteine = (sulfur carrier)-SH + L-alanine. The catalysed reaction is L-selenocysteine + AH2 = hydrogenselenide + L-alanine + A + H(+). The protein operates within cofactor biosynthesis; iron-sulfur cluster biosynthesis. Its function is as follows. Cysteine desulfurases mobilize the sulfur from L-cysteine to yield L-alanine, an essential step in sulfur metabolism for biosynthesis of a variety of sulfur-containing biomolecules. Component of the suf operon, which is activated and required under specific conditions such as oxidative stress and iron limitation. Acts as a potent selenocysteine lyase in vitro, that mobilizes selenium from L-selenocysteine. Selenocysteine lyase activity is however unsure in vivo. The polypeptide is Cysteine desulfurase (Shigella sonnei (strain Ss046)).